The following is a 420-amino-acid chain: Pre-mRNA-splicing factor RBM22 (420 aa).

Ala2 is modified (N-acetylalanine). Phosphoserine occurs at positions 4 and 102. Residues Lys139 and Lys149 each participate in a glycyl lysine isopeptide (Lys-Gly) (interchain with G-Cter in SUMO2) cross-link. A C3H1-type zinc finger spans residues 159–186 (RNRPHICSFWVKGECKRGEECPYRHEKP). Position 212 is an N6-acetyllysine (Lys212). An RRM domain is found at 232–305 (TTLYVGGLGD…RRLNVKWGRS (74 aa)). Lys290 participates in a covalent cross-link: Glycyl lysine isopeptide (Lys-Gly) (interchain with G-Cter in SUMO2). Disordered stretches follow at residues 303-343 (GRSQ…AAEE) and 371-420 (IAPP…HSSP). The segment covering 309 to 318 (RGKEKEKDGT) has biased composition (basic and acidic residues).

It belongs to the SLT11 family. Component of the pre-catalytic and catalytic spliceosome complexes. Component of the postcatalytic spliceosome P complex. Interacts with PDCD6; the interaction induces translocation of PDCD6 in the cytoplasm. Interacts with PPIL1.

Its subcellular location is the nucleus. The protein resides in the cytoplasm. Required for pre-mRNA splicing as component of the activated spliceosome. Involved in the first step of pre-mRNA splicing. Binds directly to the internal stem-loop (ISL) domain of the U6 snRNA and to the pre-mRNA intron near the 5' splice site during the activation and catalytic phases of the spliceosome cycle. Involved in both translocations of the nuclear SLU7 to the cytoplasm and the cytosolic calcium-binding protein PDCD6 to the nucleus upon cellular stress responses. In Rattus norvegicus (Rat), this protein is Pre-mRNA-splicing factor RBM22 (Rbm22).